The following is a 352-amino-acid chain: Protein Wnt-4a (352 aa).

The first 22 residues, 1-22 (MSSEYLIRSLLMLFLALFSANA), serve as a signal peptide directing secretion. 11 cysteine pairs are disulfide-bonded: C78/C89, C128/C136, C138/C155, C206/C220, C208/C215, C280/C312, C297/C307, C311/C351, C327/C342, C329/C339, and C334/C335. N88 carries an N-linked (GlcNAc...) asparagine glycan. S212 carries O-palmitoleoyl serine; by PORCN lipidation. N298 carries an N-linked (GlcNAc...) asparagine glycan.

Belongs to the Wnt family. Palmitoleoylation is required for efficient binding to frizzled receptors. Depalmitoleoylation leads to Wnt signaling pathway inhibition. Caudal forebrain and neural keel, the floor plate, the gill slit and the developing pronephros.

Its subcellular location is the secreted. The protein localises to the extracellular space. The protein resides in the extracellular matrix. Functionally, ligand for members of the frizzled family of seven transmembrane receptors. Plays an important role in embryonic development. The sequence is that of Protein Wnt-4a (wnt4a) from Danio rerio (Zebrafish).